We begin with the raw amino-acid sequence, 218 residues long: Mediator of RNA polymerase II transcription subunit 20 (218 aa).

Belongs to the Mediator complex subunit 20 family. In terms of assembly, component of the Mediator complex.

Its subcellular location is the nucleus. Functionally, component of the Mediator complex, a coactivator involved in the regulated transcription of nearly all RNA polymerase II-dependent genes. Mediator functions as a bridge to convey information from gene-specific regulatory proteins to the basal RNA polymerase II transcription machinery. Mediator is recruited to promoters by direct interactions with regulatory proteins and serves as a scaffold for the assembly of a functional preinitiation complex with RNA polymerase II and the general transcription factors. This is Mediator of RNA polymerase II transcription subunit 20 (MED20) from Anopheles gambiae (African malaria mosquito).